The sequence spans 194 residues: Oligoribonuclease (194 aa).

The region spanning 11 to 174 is the Exonuclease domain; the sequence is LIWIDLEMTG…SDVRDSIDEL (164 aa). Residue Tyr-132 is part of the active site.

This sequence belongs to the oligoribonuclease family.

It is found in the cytoplasm. Its function is as follows. 3'-to-5' exoribonuclease specific for small oligoribonucleotides. In Xanthomonas euvesicatoria pv. vesicatoria (strain 85-10) (Xanthomonas campestris pv. vesicatoria), this protein is Oligoribonuclease.